The chain runs to 424 residues: Probable serine/threonine-protein kinase PBL12 (424 aa).

In terms of domain architecture, Protein kinase spans 88 to 368 (FSRSNMLGEG…CEVVKVLESI (281 aa)). ATP-binding positions include 94–102 (LGEGGFGPV) and K123. D218 acts as the Proton acceptor in catalysis.

The protein belongs to the protein kinase superfamily. Ser/Thr protein kinase family. Expressed specifically in roots.

It localises to the cell membrane. The enzyme catalyses L-seryl-[protein] + ATP = O-phospho-L-seryl-[protein] + ADP + H(+). The catalysed reaction is L-threonyl-[protein] + ATP = O-phospho-L-threonyl-[protein] + ADP + H(+). May play a role in the signal transduction pathway of osmotic stress. May be involved in plant defense signaling. The chain is Probable serine/threonine-protein kinase PBL12 from Arabidopsis thaliana (Mouse-ear cress).